The primary structure comprises 81 residues: Sulfur carrier protein TusA (81 aa).

Cys20 functions as the Cysteine persulfide intermediate in the catalytic mechanism.

Belongs to the sulfur carrier protein TusA family.

Its subcellular location is the cytoplasm. Sulfur carrier protein which probably makes part of a sulfur-relay system. This Colwellia psychrerythraea (strain 34H / ATCC BAA-681) (Vibrio psychroerythus) protein is Sulfur carrier protein TusA.